Consider the following 858-residue polypeptide: Protein VACUOLELESS1 (858 aa).

The protein belongs to the VPS16 family. As to quaternary structure, core component of at least two putative endosomal tethering complexes, the homotypic fusion and vacuole protein sorting (HOPS) complex and the class C core vacuole/endosome tethering (CORVET) complex. Their common core is composed of the class C Vps proteins VPS11, VCL1, VPS18 and VPS33, which in HOPS further associates with VPS39 and VPS41 and in CORVET with VPS3. As to expression, expressed in roots, leaves, stems, siliques, flowers and mature pollen.

The protein resides in the vacuole membrane. It is found in the prevacuolar compartment membrane. Functionally, required for vacuole biogenesis and vacuole enlargment in dividing and expanding cells. Involved in the docking or fusion of prevacuolar vesicles. Important for the function of both male and female gametophytes, but is not essential for the germination and development of pollen. This Arabidopsis thaliana (Mouse-ear cress) protein is Protein VACUOLELESS1 (VCL1).